Consider the following 528-residue polypeptide: Protein arginine N-methyltransferase 3 (528 aa).

Positions 1-42 (MCSLAAGNGQGAELGPEPLELSDSGDDAGWEDEDADAEPAQG) are disordered. N-acetylcysteine is present on C2. Phosphoserine occurs at positions 22 and 24. The segment covering 23 to 37 (DSGDDAGWEDEDADA) has biased composition (acidic residues). The C2H2-type zinc-finger motif lies at 46-69 (TPCLFCDRLFRSAEETFSHCKLEH). Phosphoserine is present on S169. Positions 184–528 (MKQFAQDFVM…NSSTQTYSLQ (345 aa)) are mediates interaction with ALDH1A1. Positions 214 to 528 (DGVYFSSYGH…NSSTQTYSLQ (315 aa)) constitute an SAM-dependent MTase PRMT-type domain. 6 residues coordinate S-adenosyl-L-homocysteine: R236, G260, D282, S284, I310, and E311. Catalysis depends on residues E326 and E335.

It belongs to the class I-like SAM-binding methyltransferase superfamily. Protein arginine N-methyltransferase family. Monomer and homodimer. Interacts with EPB41L3 (via FERM domain); the interaction is direct and inhibits the protein-arginine N-methyltransferase activity of PRMT3. Interacts with the 40S ribosomal protein RPS2. Interacts with ALDH1A1; the interaction is direct, inhibits ALDH1A1 aldehyde dehydrogenase activity and is independent of the methyltransferase activity of PRMT3. In terms of tissue distribution, ubiquitously expressed.

Its subcellular location is the cytoplasm. It is found in the cytosol. The protein localises to the nucleus. It catalyses the reaction L-arginyl-[protein] + S-adenosyl-L-methionine = N(omega)-methyl-L-arginyl-[protein] + S-adenosyl-L-homocysteine + H(+). The catalysed reaction is L-arginyl-[protein] + 2 S-adenosyl-L-methionine = N(omega),N(omega)-dimethyl-L-arginyl-[protein] + 2 S-adenosyl-L-homocysteine + 2 H(+). With respect to regulation, inhibited by N-ethylmaleimide and high concentrations of zinc chloride. In terms of biological role, protein-arginine N-methyltransferase that catalyzes both the monomethylation and asymmetric dimethylation of the guanidino nitrogens of arginine residues in target proteins, and therefore falls into the group of type I methyltransferases. Catalyzes the asymmetric arginine dimethylation at multiple sites in the Arg/Gly-rich region of small ribosomal subunit protein uS5/RPS2. Also appears to methylate other ribosomal proteins. May regulate retinoic acid synthesis and signaling by inhibiting ALDH1A1 retinal dehydrogenase activity. Contributes to methylation of histone H4 'Arg-3', a specific tag for epigenetic transcriptional activation. Promotes osteogenesis. This Rattus norvegicus (Rat) protein is Protein arginine N-methyltransferase 3.